We begin with the raw amino-acid sequence, 620 residues long: Long-chain fatty acid transport protein 2 (620 aa).

The Lumenal segment spans residues 1–4 (MLPV). The chain crosses the membrane as a helical span at residues 5–27 (LYTGLAGLLLLPLLLTCCCPYLL). Residues 28-106 (QDVRFFLQLA…DHLGLRQGDC (79 aa)) are Cytoplasmic-facing. Residues 107–127 (VALFMGNEPAYVWLWLGLLKL) traverse the membrane as a helical segment. The Lumenal portion of the chain corresponds to 128 to 267 (GCPMACLNYN…DVIYTTMPLY (140 aa)). 222–233 (YIYTSGTTGLPK) lines the AMP pocket. A helical transmembrane segment spans residues 268-288 (HSAALMIGLHGCIVVGATFAL). Topologically, residues 289–620 (RSKFSASQFW…NAIIDKTLKL (332 aa)) are cytoplasmic. Lys291 is subject to N6-acetyllysine. A Phosphothreonine modification is found at Thr577.

It belongs to the ATP-dependent AMP-binding enzyme family. Liver and kidney (at protein level).

The protein resides in the endoplasmic reticulum membrane. It is found in the peroxisome membrane. Its subcellular location is the cell membrane. The protein localises to the microsome. The enzyme catalyses a fatty acid(in) = a fatty acid(out). It catalyses the reaction (9Z)-octadecenoate(out) = (9Z)-octadecenoate(in). The catalysed reaction is a long-chain fatty acid + ATP + CoA = a long-chain fatty acyl-CoA + AMP + diphosphate. It carries out the reaction (5Z,8Z,11Z,14Z)-eicosatetraenoate + ATP + CoA = (5Z,8Z,11Z,14Z)-eicosatetraenoyl-CoA + AMP + diphosphate. The enzyme catalyses (9Z,12Z,15Z)-octadecatrienoate + ATP + CoA = (9Z,12Z,15Z)-octadecatrienoyl-CoA + AMP + diphosphate. It catalyses the reaction hexadecanoate + ATP + CoA = hexadecanoyl-CoA + AMP + diphosphate. The catalysed reaction is (9Z)-octadecenoate + ATP + CoA = (9Z)-octadecenoyl-CoA + AMP + diphosphate. It carries out the reaction 2,6,10,14-tetramethylpentadecanoate + ATP + CoA = pristanoyl-CoA + AMP + diphosphate. The enzyme catalyses (E)-hexadec-2-enoate + ATP + CoA = (2E)-hexadecenoyl-CoA + AMP + diphosphate. It catalyses the reaction 3,7,11,15-tetramethylhexadecanoate + ATP + CoA = phytanoyl-CoA + AMP + diphosphate. The catalysed reaction is a very long-chain fatty acid + ATP + CoA = a very long-chain fatty acyl-CoA + AMP + diphosphate. It carries out the reaction tetracosanoate + ATP + CoA = tetracosanoyl-CoA + AMP + diphosphate. The enzyme catalyses (4Z,7Z,10Z,13Z,16Z,19Z)-docosahexaenoate + ATP + CoA = (4Z,7Z,10Z,13Z,16Z,19Z)-docosahexaenoyl-CoA + AMP + diphosphate. It catalyses the reaction (25R)-3alpha,7alpha,12alpha-trihydroxy-5beta-cholestan-26-oate + ATP + CoA = (25R)-3alpha,7alpha,12alpha-trihydroxy-5beta-cholestan-26-oyl-CoA + AMP + diphosphate. Functionally, mediates the import of long-chain fatty acids (LCFA) into the cell by facilitating their transport across cell membranes, playing an important role in hepatic fatty acid uptake. Also functions as an acyl-CoA ligase catalyzing the ATP-dependent formation of fatty acyl-CoA using LCFA and very-long-chain fatty acids (VLCFA) as substrates, which prevents fatty acid efflux from cells and might drive more fatty acid uptake. Plays a pivotal role in regulating available LCFA substrates from exogenous sources in tissues undergoing high levels of beta-oxidation or triglyceride synthesis. Can also activate branched-chain fatty acids such as phytanic acid and pristanic acid. May contribute to the synthesis of sphingosine-1-phosphate. Does not activate C24 bile acids, cholate and chenodeoxycholate. In vitro, activates 3-alpha,7-alpha,12-alpha-trihydroxy-5-beta-cholestanate (THCA), the C27 precursor of cholic acid deriving from the de novo synthesis from cholesterol. However, it is not critical for THCA activation and bile synthesis in vivo. This is Long-chain fatty acid transport protein 2 (Slc27a2) from Rattus norvegicus (Rat).